A 242-amino-acid chain; its full sequence is Probable transcriptional regulatory protein EUBREC_1961 (242 aa).

This sequence belongs to the TACO1 family.

The protein resides in the cytoplasm. The sequence is that of Probable transcriptional regulatory protein EUBREC_1961 from Agathobacter rectalis (strain ATCC 33656 / DSM 3377 / JCM 17463 / KCTC 5835 / VPI 0990) (Eubacterium rectale).